The following is a 380-amino-acid chain: Proline iminopeptidase (380 aa).

The 263-residue stretch at 98–360 (PVVFLHGGPG…IVYDAGHSAN (263 aa)) folds into the AB hydrolase-1 domain. The active-site Nucleophile is the serine 172. Aspartate 329 is an active-site residue. Histidine 357 functions as the Proton donor in the catalytic mechanism.

This sequence belongs to the peptidase S33 family.

The protein resides in the cytoplasm. It catalyses the reaction Release of N-terminal proline from a peptide.. Its function is as follows. Specifically catalyzes the removal of N-terminal proline residues from peptides. In Arabidopsis thaliana (Mouse-ear cress), this protein is Proline iminopeptidase (PIP).